A 309-amino-acid polypeptide reads, in one-letter code: Elongation factor Ts (309 aa).

An involved in Mg(2+) ion dislocation from EF-Tu region spans residues 82–85 (TDFV).

The protein belongs to the EF-Ts family.

It localises to the cytoplasm. Its function is as follows. Associates with the EF-Tu.GDP complex and induces the exchange of GDP to GTP. It remains bound to the aminoacyl-tRNA.EF-Tu.GTP complex up to the GTP hydrolysis stage on the ribosome. The chain is Elongation factor Ts from Rickettsia akari (strain Hartford).